A 184-amino-acid chain; its full sequence is Photosystem I assembly protein Ycf4 (184 aa).

The next 2 membrane-spanning stretches (helical) occupy residues 22-42 and 57-77; these read FCWA…GTSS and ILFF…LFIS.

This sequence belongs to the Ycf4 family.

It is found in the plastid. Its subcellular location is the chloroplast thylakoid membrane. In terms of biological role, seems to be required for the assembly of the photosystem I complex. The polypeptide is Photosystem I assembly protein Ycf4 (Phalaenopsis aphrodite subsp. formosana (Moth orchid)).